The following is a 478-amino-acid chain: Kynurenine 3-monooxygenase (478 aa).

FAD is bound by residues Val-19, 37–40 (YEAR), and Ala-57. L-kynurenine-binding residues include Arg-85 and Tyr-99. FAD is bound by residues Arg-111, Leu-136, Thr-172, Asp-304, and 317-318 (MN). L-kynurenine contacts are provided by Asn-363 and Tyr-398. The next 2 helical transmembrane spans lie at 385 to 404 (FLHA…VAFT) and 425 to 445 (GLFV…VHHL).

Belongs to the aromatic-ring hydroxylase family. KMO subfamily. It depends on FAD as a cofactor. In terms of tissue distribution, highest activity in liver and kidney. Low activity in spleen, stomach, intestinal tract, esophagus, heart and lung.

The protein localises to the mitochondrion outer membrane. It catalyses the reaction L-kynurenine + NADPH + O2 + H(+) = 3-hydroxy-L-kynurenine + NADP(+) + H2O. The protein operates within cofactor biosynthesis; NAD(+) biosynthesis; quinolinate from L-kynurenine: step 1/3. Its function is as follows. Catalyzes the hydroxylation of L-kynurenine (L-Kyn) to form 3-hydroxy-L-kynurenine (L-3OHKyn). Required for synthesis of quinolinic acid, a neurotoxic NMDA receptor antagonist and potential endogenous inhibitor of NMDA receptor signaling in axonal targeting, synaptogenesis and apoptosis during brain development. Quinolinic acid may also affect NMDA receptor signaling in pancreatic beta cells, osteoblasts, myocardial cells, and the gastrointestinal tract. This is Kynurenine 3-monooxygenase from Rattus norvegicus (Rat).